The sequence spans 124 residues: Small ribosomal subunit protein uS12 (124 aa).

Asp89 bears the 3-methylthioaspartic acid mark.

Belongs to the universal ribosomal protein uS12 family. Part of the 30S ribosomal subunit. Contacts proteins S8 and S17. May interact with IF1 in the 30S initiation complex.

In terms of biological role, with S4 and S5 plays an important role in translational accuracy. Interacts with and stabilizes bases of the 16S rRNA that are involved in tRNA selection in the A site and with the mRNA backbone. Located at the interface of the 30S and 50S subunits, it traverses the body of the 30S subunit contacting proteins on the other side and probably holding the rRNA structure together. The combined cluster of proteins S8, S12 and S17 appears to hold together the shoulder and platform of the 30S subunit. The sequence is that of Small ribosomal subunit protein uS12 from Erwinia amylovora (Fire blight bacteria).